A 560-amino-acid chain; its full sequence is MKKVLNKYSRRLTEDKSQGASQAMLYGTEMNDADMHKPQIGIGSVWYEGNTCNMHLNQLAQFVKDSVEKENLKGMRFNTIGVSDGISMGTDGMSYSLQSRDLIADSIETVMSAHWYDGLVSIPGCDKNMPGCMMALGRLNRPGFVIYGGTIQAGVMRGKPIDIVTAFQSYGACLSGQITEQERQETIKKACPGAGACGGMYTANTMACAIEALGMSLPFSSSTSATSVEKVQECDKAGETIKNLLELDIKPRDIMTRKAFENAMVLITVMGGSTNAVLHLLAMASSVDVDLSIDDFQEIANKTPVLADFKPSGKYVMANLHAIGGTPAVMKMLLKAGMLHGDCLTVTGKTLAENLENVADLPEDNTIIHKLDNPIKKTGHLQILKGNVAPEGSVAKITGKEGEIFEGVANVFDSEEEMVAAVETGKVKKGDVIVIRYEGPKGGPGMPEMLKPTSLIMGAGLGQDVALITDGRFSGGSHGFIVGHITPEAYEGGMIALLENGDKITIDAINNVINVDLSDQEIAQRKSKWRASKQKASRGTLKKYIKTVSSASTGCVTDLD.

C52 serves as a coordination point for [2Fe-2S] cluster. D84 serves as a coordination point for Mg(2+). C125 contacts [2Fe-2S] cluster. Mg(2+)-binding residues include D126 and K127. K127 carries the post-translational modification N6-carboxylysine. C197 is a binding site for [2Fe-2S] cluster. Residue E448 coordinates Mg(2+). The Proton acceptor role is filled by S474.

Belongs to the IlvD/Edd family. In terms of assembly, homodimer. The cofactor is [2Fe-2S] cluster. It depends on Mg(2+) as a cofactor.

It catalyses the reaction (2R)-2,3-dihydroxy-3-methylbutanoate = 3-methyl-2-oxobutanoate + H2O. The catalysed reaction is (2R,3R)-2,3-dihydroxy-3-methylpentanoate = (S)-3-methyl-2-oxopentanoate + H2O. It functions in the pathway amino-acid biosynthesis; L-isoleucine biosynthesis; L-isoleucine from 2-oxobutanoate: step 3/4. It participates in amino-acid biosynthesis; L-valine biosynthesis; L-valine from pyruvate: step 3/4. Functionally, functions in the biosynthesis of branched-chain amino acids. Catalyzes the dehydration of (2R,3R)-2,3-dihydroxy-3-methylpentanoate (2,3-dihydroxy-3-methylvalerate) into 2-oxo-3-methylpentanoate (2-oxo-3-methylvalerate) and of (2R)-2,3-dihydroxy-3-methylbutanoate (2,3-dihydroxyisovalerate) into 2-oxo-3-methylbutanoate (2-oxoisovalerate), the penultimate precursor to L-isoleucine and L-valine, respectively. In Francisella tularensis subsp. tularensis (strain WY96-3418), this protein is Dihydroxy-acid dehydratase.